The chain runs to 484 residues: Cysteine--tRNA ligase (484 aa).

Cys29 is a binding site for Zn(2+). A 'HIGH' region motif is present at residues 31–41; that stretch reads ATVQGMPHVGH. 3 residues coordinate Zn(2+): Cys227, His252, and Glu256. Residues 283–287 carry the 'KMSKS' region motif; that stretch reads KMSKS. Lys286 contacts ATP.

The protein belongs to the class-I aminoacyl-tRNA synthetase family. In terms of assembly, monomer. It depends on Zn(2+) as a cofactor.

The protein resides in the cytoplasm. The enzyme catalyses tRNA(Cys) + L-cysteine + ATP = L-cysteinyl-tRNA(Cys) + AMP + diphosphate. The polypeptide is Cysteine--tRNA ligase (Paenarthrobacter aurescens (strain TC1)).